The following is a 584-amino-acid chain: 2-succinyl-5-enolpyruvyl-6-hydroxy-3-cyclohexene-1-carboxylate synthase (584 aa).

The protein belongs to the TPP enzyme family. MenD subfamily. As to quaternary structure, homodimer. Requires Mg(2+) as cofactor. Mn(2+) serves as cofactor. Thiamine diphosphate is required as a cofactor.

It carries out the reaction isochorismate + 2-oxoglutarate + H(+) = 5-enolpyruvoyl-6-hydroxy-2-succinyl-cyclohex-3-ene-1-carboxylate + CO2. It functions in the pathway quinol/quinone metabolism; 1,4-dihydroxy-2-naphthoate biosynthesis; 1,4-dihydroxy-2-naphthoate from chorismate: step 2/7. Its pathway is quinol/quinone metabolism; menaquinone biosynthesis. Functionally, catalyzes the thiamine diphosphate-dependent decarboxylation of 2-oxoglutarate and the subsequent addition of the resulting succinic semialdehyde-thiamine pyrophosphate anion to isochorismate to yield 2-succinyl-5-enolpyruvyl-6-hydroxy-3-cyclohexene-1-carboxylate (SEPHCHC). The chain is 2-succinyl-5-enolpyruvyl-6-hydroxy-3-cyclohexene-1-carboxylate synthase from Bacillus anthracis.